Here is a 418-residue protein sequence, read N- to C-terminus: Homoaconitase large subunit (418 aa).

Cys-292, Cys-352, and Cys-355 together coordinate [4Fe-4S] cluster.

Belongs to the aconitase/IPM isomerase family. As to quaternary structure, heterodimer of HacA and HacB. The cofactor is [4Fe-4S] cluster.

The enzyme catalyses (2R,3S)-homoisocitrate = cis-homoaconitate + H2O. It participates in amino-acid biosynthesis; L-lysine biosynthesis via AAA pathway; L-alpha-aminoadipate from 2-oxoglutarate: step 3/5. With respect to regulation, is not inhibited by lysine. Its function is as follows. Catalyzes the reversible hydration of cis-homoaconitate ((Z)-but-1-ene-1,2,4-tricarboxylate) to homoisocitrate ((1R,2S)-1-hydroxybutane-1,2,4-tricarboxylate). Can catalyze neither the dehydration of (R)-homocitrate ((2R)-2-hydroxybutane-1,2,4-tricarboxylate) into cis-homoaconitate in vitro, nor the reverse reaction. Is not active toward (S)-homocitrate, cis-aconitate or citrate as substrate. This is Homoaconitase large subunit (hacA) from Thermus thermophilus (strain ATCC BAA-163 / DSM 7039 / HB27).